A 1262-amino-acid polypeptide reads, in one-letter code: Synaptopodin-2 (1262 aa).

The interaction with VPS18 stretch occupies residues 1-174 (MGTGDFICIS…PGSQEGHLVE (174 aa)). Residues 6 to 88 (FICISMTGGA…SLHLLIKRPT (83 aa)) enclose the PDZ domain. 2 stretches are compositionally biased toward polar residues: residues 89–105 (SGTS…TNHQ) and 246–260 (TSLT…SSGR). 2 disordered regions span residues 89–114 (SGTS…GPME) and 239–276 (PAPE…TGLP). Phosphoserine occurs at positions 304, 323, and 324. Positions 323–363 (SSEGTEQGEDQRSGKDQGRPHKHRARHARLRRSESLSEKQV) are disordered. Threonine 327 bears the Phosphothreonine mark. The segment covering 331–341 (EDQRSGKDQGR) has biased composition (basic and acidic residues). Positions 342–352 (PHKHRARHARL) are enriched in basic residues. The span at 353–363 (RRSESLSEKQV) shows a compositional bias: basic and acidic residues. The Nuclear localization signal motif lies at 392 to 400 (KKRRRRARK). 3 interaction with ACTN2 regions span residues 477 to 658 (MEML…FYDS), 659 to 922 (SEQI…PPVA), and 899 to 1153 (QSPT…NIEE). Disordered regions lie at residues 503–576 (AQNE…GPQR) and 592–703 (NQTA…SPNP). Phosphoserine is present on residues serine 518, serine 543, serine 544, serine 546, and serine 549. F-actin binding stretches follow at residues 530 to 658 (TSYQ…FYDS) and 659 to 801 (SEQI…VTAV). Residues 540–552 (RMQSSVSESSFQM) show a composition bias toward low complexity. The interval 554 to 560 (RSLGSVP) is interaction with YWHAB. A Phosphoserine; by PKA modification is found at serine 558. 2 stretches are compositionally biased toward polar residues: residues 558–569 (SVPQQNGFSGVS) and 592–606 (NQTA…SVTS). Position 599 is a phosphoserine (serine 599). The interval 602–809 (QSVTSPIPDF…AVSSIKIAQP (208 aa)) is interaction with YWHAB. Threonine 605 bears the Phosphothreonine; by PKA and CaMK2 mark. Serine 606 carries the phosphoserine modification. Pro residues-rich tracts occupy residues 609-625 (PDFP…PPPE) and 639-650 (AQPPPWPQPAPW). The segment at 610–621 (DFPAPPPYSAVS) is interaction with BAG3. The PPPY motif signature appears at 614 to 617 (PPPY). Tyrosine 617 carries the phosphotyrosine modification. Position 621 is a phosphoserine (serine 621). Residues 659–914 (SEQIASRDER…LPASWKYSSN (256 aa)) form an F-actin bundling activity region. Phosphoserine is present on residues serine 700 and serine 724. Disordered regions lie at residues 741–799 (MQSS…PQVT) and 833–868 (VVSH…GMSG). The segment at 745–898 (AKQKTPPPVA…DTVQAHTVRA (154 aa)) is actin binding. Threonine 749 bears the Phosphothreonine mark. The span at 756–782 (KPAVKTSSSSQPVAPVSPVWSPGVAPA) shows a compositional bias: low complexity. Residues serine 772 and serine 776 each carry the phosphoserine modification. Residues 786–799 (AFSTTNPPNPPQVT) are compositionally biased toward polar residues. Positions 808 to 1153 (QPTCPPARPA…EAFRPRNIEE (346 aa)) are interaction with FLNC. Phosphoserine occurs at positions 900, 904, and 908. Residues 933-957 (LAAIKSQPPGAQASKTSKKKGKKPL) are disordered. Positions 999-1018 (PAMKQALPPRQADIGSPTNA) are interaction with ZYX. A phosphoserine mark is found at serine 1014, serine 1055, and serine 1090.

It belongs to the synaptopodin family. May self-associate in muscle cells under oxidative stress. Binds F-actin. Interacts with ACTN2; ACTN2 is proposed to anchor SYOP2 at Z lines in mature myocytes. Interacts with AKAP6, PPP3CA and CAMK2A. Interacts (phosphorylated form) with YWHAB; YWHAB competes with ACTN2 for interaction with SYNPO2. Interacts with KPNA2; mediating nuclear import of SYNOP2; dependent on interaction with YWHAB. Interacts with IPO13; may be implicated in SYNOP2 nuclear import. Interacts with ZYX, FLNC, ILK. Interacts with BAG3 (via WW 1 domain). May associate with the CASA complex consisting of HSPA8, HSPB8 and BAG3. Interacts with VPS18. Post-translationally, phosphorylated by PKA, and by CaMK2 at multiple sites. Dephosphorylated by calcineurin at Ser-558 and Thr-605; abrogating interaction with YWHAB and impairing nuclear import.

It localises to the nucleus. The protein localises to the cytoplasm. The protein resides in the cytoskeleton. Its subcellular location is the myofibril. It is found in the sarcomere. It localises to the z line. The protein localises to the cell junction. The protein resides in the focal adhesion. Its function is as follows. Has an actin-binding and actin-bundling activity. Can induce the formation of F-actin networks. At the sarcomeric Z lines is proposed to act as adapter protein that links nascent myofibers to the sarcolemma via ZYX and may play a role in early assembly and stabilization of the Z lines. Involved in autophagosome formation. May play a role in chaperone-assisted selective autophagy (CASA) involved in Z lines maintenance in striated muscle under mechanical tension; may link the client-processing CASA chaperone machinery to a membrane-tethering and fusion complex providing autophagosome membranes. Involved in regulation of cell migration. May be a tumor suppressor. The chain is Synaptopodin-2 (Synpo2) from Rattus norvegicus (Rat).